Here is a 340-residue protein sequence, read N- to C-terminus: Glycerol-3-phosphate dehydrogenase [NAD(P)+] (340 aa).

NADPH-binding residues include serine 11, tryptophan 12, arginine 33, and lysine 106. Sn-glycerol 3-phosphate-binding residues include lysine 106, glycine 137, and serine 139. Alanine 141 is an NADPH binding site. Lysine 192, aspartate 245, serine 255, arginine 256, and asparagine 257 together coordinate sn-glycerol 3-phosphate. The active-site Proton acceptor is lysine 192. Arginine 256 is an NADPH binding site. Residues valine 280 and glutamate 282 each coordinate NADPH.

This sequence belongs to the NAD-dependent glycerol-3-phosphate dehydrogenase family.

It is found in the cytoplasm. It catalyses the reaction sn-glycerol 3-phosphate + NAD(+) = dihydroxyacetone phosphate + NADH + H(+). The enzyme catalyses sn-glycerol 3-phosphate + NADP(+) = dihydroxyacetone phosphate + NADPH + H(+). It functions in the pathway membrane lipid metabolism; glycerophospholipid metabolism. Functionally, catalyzes the reduction of the glycolytic intermediate dihydroxyacetone phosphate (DHAP) to sn-glycerol 3-phosphate (G3P), the key precursor for phospholipid synthesis. The polypeptide is Glycerol-3-phosphate dehydrogenase [NAD(P)+] (Bacillus cereus (strain 03BB102)).